A 516-amino-acid polypeptide reads, in one-letter code: Cilia- and flagella-associated protein 53 (516 aa).

2 coiled-coil regions span residues 217 to 283 (EEKK…LQVK) and 316 to 440 (MQGY…RQMK). 2 stretches are compositionally biased toward basic and acidic residues: residues 417 to 436 (KELL…DRNA) and 461 to 472 (QAEREEEQREFE). Disordered regions lie at residues 417–443 (KELL…KVAQ) and 455–475 (YQQS…EAGL).

Belongs to the CFAP53 family.

The protein resides in the cytoplasm. It is found in the cytoskeleton. Its subcellular location is the cilium axoneme. The protein localises to the microtubule organizing center. It localises to the centrosome. The protein resides in the centriolar satellite. Its function is as follows. Microtubule inner protein (MIP) part of the dynein-decorated doublet microtubules (DMTs) in cilia axoneme, which is required for motile cilia beating. Regulates motility patterns of both 9+0 and 9+2 motile cilia through differential localization and recruitment of axonemal dynein components. Required for motile cilium formation and movement. Involved in the establishment of left-right symmetry during embryogenesis. In Xenopus laevis (African clawed frog), this protein is Cilia- and flagella-associated protein 53.